The chain runs to 196 residues: Probable malonic semialdehyde reductase RutE (196 aa).

This sequence belongs to the nitroreductase family. HadB/RutE subfamily. It depends on FMN as a cofactor.

It carries out the reaction 3-hydroxypropanoate + NADP(+) = 3-oxopropanoate + NADPH + H(+). Its function is as follows. May reduce toxic product malonic semialdehyde to 3-hydroxypropionic acid, which is excreted. The chain is Probable malonic semialdehyde reductase RutE from Shigella sonnei (strain Ss046).